The following is a 111-amino-acid chain: Cytochrome c oxidase subunit 7A2-like, mitochondrial (111 aa).

A mitochondrion-targeting transit peptide spans 1-54; that stretch reads MYYKFSSFTQKLAGAWASEAYTPQGLKPVSTEAPPIIFATPTKLTSSVTAYDYS. At K68 the chain carries N6-acetyllysine. A helical membrane pass occupies residues 79–104; the sequence is PDQMLYRTTMALTLGGTIYCLIALYM.

It belongs to the cytochrome c oxidase VIIa family.

It is found in the mitochondrion inner membrane. Non-functional protein. In contrast to the protein found in other strains (AC Q99KD6), cannot induce the assembly of mitochondrial respiratory supercomplexes. The polypeptide is Cytochrome c oxidase subunit 7A2-like, mitochondrial (Mus musculus (Mouse)).